Consider the following 598-residue polypeptide: NADH-quinone oxidoreductase subunit C/D (598 aa).

Residues 1–189 (MTDLTTSDSL…DPYVLTKQKE (189 aa)) form an NADH dehydrogenase I subunit C region. Positions 213–598 (DFMFLNLGPN…IDFVMSDVDR (386 aa)) are NADH dehydrogenase I subunit D.

The protein in the N-terminal section; belongs to the complex I 30 kDa subunit family. This sequence in the C-terminal section; belongs to the complex I 49 kDa subunit family. As to quaternary structure, NDH-1 is composed of 13 different subunits. Subunits NuoB, CD, E, F, and G constitute the peripheral sector of the complex.

The protein resides in the cell inner membrane. It catalyses the reaction a quinone + NADH + 5 H(+)(in) = a quinol + NAD(+) + 4 H(+)(out). NDH-1 shuttles electrons from NADH, via FMN and iron-sulfur (Fe-S) centers, to quinones in the respiratory chain. The immediate electron acceptor for the enzyme in this species is believed to be ubiquinone. Couples the redox reaction to proton translocation (for every two electrons transferred, four hydrogen ions are translocated across the cytoplasmic membrane), and thus conserves the redox energy in a proton gradient. In Yersinia pseudotuberculosis serotype O:1b (strain IP 31758), this protein is NADH-quinone oxidoreductase subunit C/D.